A 545-amino-acid chain; its full sequence is CTP synthase (545 aa).

Positions 1 to 266 are amidoligase domain; it reads MTKNYIFITG…DDYICNYFKL (266 aa). A CTP-binding site is contributed by serine 14. Serine 14 provides a ligand contact to UTP. ATP is bound by residues 15 to 20 and aspartate 72; that span reads SLGKGI. Mg(2+) is bound by residues aspartate 72 and glutamate 140. Residues 147-149, 187-192, and lysine 223 each bind CTP; these read DIE and KTKPTQ. Residues 187-192 and lysine 223 each bind UTP; that span reads KTKPTQ. 239-241 contributes to the ATP binding site; sequence KDV. Residues 291 to 543 enclose the Glutamine amidotransferase type-1 domain; the sequence is VIGIIGKYIK…IKSAGKHKKN (253 aa). Glycine 352 provides a ligand contact to L-glutamine. Residue cysteine 379 is the Nucleophile; for glutamine hydrolysis of the active site. L-glutamine is bound by residues 380 to 383, glutamate 403, and arginine 471; that span reads LGMQ. Residues histidine 516 and glutamate 518 contribute to the active site.

It belongs to the CTP synthase family. Homotetramer.

The enzyme catalyses UTP + L-glutamine + ATP + H2O = CTP + L-glutamate + ADP + phosphate + 2 H(+). It carries out the reaction L-glutamine + H2O = L-glutamate + NH4(+). It catalyses the reaction UTP + NH4(+) + ATP = CTP + ADP + phosphate + 2 H(+). Its pathway is pyrimidine metabolism; CTP biosynthesis via de novo pathway; CTP from UDP: step 2/2. Allosterically activated by GTP, when glutamine is the substrate; GTP has no effect on the reaction when ammonia is the substrate. The allosteric effector GTP functions by stabilizing the protein conformation that binds the tetrahedral intermediate(s) formed during glutamine hydrolysis. Inhibited by the product CTP, via allosteric rather than competitive inhibition. Catalyzes the ATP-dependent amination of UTP to CTP with either L-glutamine or ammonia as the source of nitrogen. Regulates intracellular CTP levels through interactions with the four ribonucleotide triphosphates. This chain is CTP synthase, found in Buchnera aphidicola subsp. Acyrthosiphon pisum (strain Tuc7).